The sequence spans 488 residues: Bifunctional protein HldE (488 aa).

A ribokinase region spans residues 1-330 (MDRKSIESIF…NAVALAHSDS (330 aa)). 205-208 (NRRE) is an ATP binding site. Asp275 is an active-site residue. The cytidylyltransferase stretch occupies residues 356 to 488 (FTNGCFDLLH…IIERVLERYS (133 aa)).

This sequence in the N-terminal section; belongs to the carbohydrate kinase PfkB family. In the C-terminal section; belongs to the cytidylyltransferase family. As to quaternary structure, homodimer.

The catalysed reaction is D-glycero-beta-D-manno-heptose 7-phosphate + ATP = D-glycero-beta-D-manno-heptose 1,7-bisphosphate + ADP + H(+). The enzyme catalyses D-glycero-beta-D-manno-heptose 1-phosphate + ATP + H(+) = ADP-D-glycero-beta-D-manno-heptose + diphosphate. It participates in nucleotide-sugar biosynthesis; ADP-L-glycero-beta-D-manno-heptose biosynthesis; ADP-L-glycero-beta-D-manno-heptose from D-glycero-beta-D-manno-heptose 7-phosphate: step 1/4. The protein operates within nucleotide-sugar biosynthesis; ADP-L-glycero-beta-D-manno-heptose biosynthesis; ADP-L-glycero-beta-D-manno-heptose from D-glycero-beta-D-manno-heptose 7-phosphate: step 3/4. In terms of biological role, catalyzes the phosphorylation of D-glycero-D-manno-heptose 7-phosphate at the C-1 position to selectively form D-glycero-beta-D-manno-heptose-1,7-bisphosphate. Catalyzes the ADP transfer from ATP to D-glycero-beta-D-manno-heptose 1-phosphate, yielding ADP-D-glycero-beta-D-manno-heptose. The polypeptide is Bifunctional protein HldE (Pelobacter propionicus (strain DSM 2379 / NBRC 103807 / OttBd1)).